A 240-amino-acid chain; its full sequence is 2,3,4,5-tetrahydropyridine-2,6-dicarboxylate N-acetyltransferase (240 aa).

The protein belongs to the transferase hexapeptide repeat family. DapH subfamily.

It carries out the reaction (S)-2,3,4,5-tetrahydrodipicolinate + acetyl-CoA + H2O = L-2-acetamido-6-oxoheptanedioate + CoA. It participates in amino-acid biosynthesis; L-lysine biosynthesis via DAP pathway; LL-2,6-diaminopimelate from (S)-tetrahydrodipicolinate (acetylase route): step 1/3. Catalyzes the transfer of an acetyl group from acetyl-CoA to tetrahydrodipicolinate. This is 2,3,4,5-tetrahydropyridine-2,6-dicarboxylate N-acetyltransferase from Bacillus anthracis (strain A0248).